The primary structure comprises 404 residues: Exodeoxyribonuclease 7 large subunit (404 aa).

Belongs to the XseA family. As to quaternary structure, heterooligomer composed of large and small subunits.

The protein resides in the cytoplasm. The enzyme catalyses Exonucleolytic cleavage in either 5'- to 3'- or 3'- to 5'-direction to yield nucleoside 5'-phosphates.. In terms of biological role, bidirectionally degrades single-stranded DNA into large acid-insoluble oligonucleotides, which are then degraded further into small acid-soluble oligonucleotides. This is Exodeoxyribonuclease 7 large subunit from Fusobacterium nucleatum subsp. nucleatum (strain ATCC 25586 / DSM 15643 / BCRC 10681 / CIP 101130 / JCM 8532 / KCTC 2640 / LMG 13131 / VPI 4355).